Reading from the N-terminus, the 142-residue chain is MGMMQEFKEFAIKGNVIDLAVGVIIGAAFSKIVDSVVGDLIMPVVGAVIGKLDFSNMFVVLRSVPPGIPTTLDALKKAGVPVFAYGNFITVAVNFAILAFIIFLMVKQINRLKRREVVKPTTAPAEDIMLLREIRDSLKKQA.

The next 2 helical transmembrane spans lie at 10 to 30 (FAIK…AAFS) and 86 to 106 (GNFI…FLMV).

Belongs to the MscL family. As to quaternary structure, homopentamer.

It is found in the cell inner membrane. Channel that opens in response to stretch forces in the membrane lipid bilayer. May participate in the regulation of osmotic pressure changes within the cell. The sequence is that of Large-conductance mechanosensitive channel from Polaromonas naphthalenivorans (strain CJ2).